The primary structure comprises 181 residues: ATP synthase subunit b (181 aa).

The helical transmembrane segment at 23–43 (FIHIPTFIYTALNLVILYFIL) threads the bilayer.

This sequence belongs to the ATPase B chain family. In terms of assembly, F-type ATPases have 2 components, F(1) - the catalytic core - and F(0) - the membrane proton channel. F(1) has five subunits: alpha(3), beta(3), gamma(1), delta(1), epsilon(1). F(0) has three main subunits: a(1), b(2) and c(10-14). The alpha and beta chains form an alternating ring which encloses part of the gamma chain. F(1) is attached to F(0) by a central stalk formed by the gamma and epsilon chains, while a peripheral stalk is formed by the delta and b chains.

The protein resides in the cell membrane. Its function is as follows. F(1)F(0) ATP synthase produces ATP from ADP in the presence of a proton or sodium gradient. F-type ATPases consist of two structural domains, F(1) containing the extramembraneous catalytic core and F(0) containing the membrane proton channel, linked together by a central stalk and a peripheral stalk. During catalysis, ATP synthesis in the catalytic domain of F(1) is coupled via a rotary mechanism of the central stalk subunits to proton translocation. Component of the F(0) channel, it forms part of the peripheral stalk, linking F(1) to F(0). The chain is ATP synthase subunit b from Acetivibrio thermocellus (strain ATCC 27405 / DSM 1237 / JCM 9322 / NBRC 103400 / NCIMB 10682 / NRRL B-4536 / VPI 7372) (Clostridium thermocellum).